The primary structure comprises 846 residues: SLIT and NTRK-like protein 2 (846 aa).

Residues 1–21 (MLSGVWFLSVLTVAGILQTES) form the signal peptide. Over 22–622 (RKTAKDICKI…LHTEVPLSVL (601 aa)) the chain is Extracellular. 2 disulfide bridges follow: Cys29–Cys35 and Cys33–Cys46. 6 LRR repeats span residues 63–84 (RIYQ…EFVN), 87–108 (NAVT…AFSG), 111–132 (TLKR…TFLG), 135–156 (SLEY…AFSK), 159–180 (KLKV…VFRF), and 182–203 (LLTH…GVLE). Residue Asn84 is glycosylated (N-linked (GlcNAc...) asparagine). A required for interaction with PTPRD region spans residues 167–215 (DNLLLSLPSNVFRFVLLTHLDLRGNRLKVMPFAGVLEHIGGIMEIQLEE). Residues 216 to 265 (NPWNCTCDLLPLKAWLDTITVFVGEIVCETPFRLHGKDVTQLTRQDLCPR) enclose the LRRCT 1 domain. An N-linked (GlcNAc...) asparagine glycan is attached at Asn219. Intrachain disulfides connect Cys220–Cys243 and Cys222–Cys263. Residues 261-322 (DLCPRKSASG…TPRVTVSKDR (62 aa)) form a disordered region. Composition is skewed to low complexity over residues 267-276 (SASGDSSQRS) and 285-300 (RLTP…TRAP). The LRRNT domain maps to 332 to 374 (QTKSPVALTCPSSCVCTSQSSDNGLNVNCQERKFTNISDLQPK). 6 LRR repeats span residues 377–398 (SPKK…DLLE), 401–422 (SLDL…AFTN), 425–446 (SLRR…MFDG), 449–470 (SLQY…TFDA), 473–494 (NLQL…IFGG), and 496–517 (ALTR…GVLD). Residue Asn422 is glycosylated (N-linked (GlcNAc...) asparagine). The LRRCT 2 domain maps to 530–581 (NPWDCTCDIMGLKDWTEHANSPVIINEVTCESPAKHAGEILKFLGREAICPE). A helical transmembrane segment spans residues 623-643 (ILGLLVVFILSVCFGAGLFVF). The Cytoplasmic portion of the chain corresponds to 644-846 (VLKRRKGVPN…LEKQTAISQL (203 aa)). At Tyr757 the chain carries Phosphotyrosine.

The protein belongs to the SLITRK family. In terms of assembly, interacts with PTPRD; this interaction is PTPRD splicing-dependent and may induce pre-synaptic differentiation. Interacts with NTRK2. In terms of tissue distribution, in the adult, significant expression is detected only in the brain. Broadly expressed in embryonic brain with highest expression in ventricular layer, subventricular zone, cortical plate, pyramidal layer of hippocampus, subicular neuroepithelium, thalamus, hypothalamus and spinal cord.

The protein resides in the membrane. It is found in the cell membrane. Its subcellular location is the cell projection. The protein localises to the dendrite. Functionally, it is involved in synaptogenesis. Promotes excitatory synapse differentiation. Suppresses neurite outgrowth. Involved in the negative regulation of NTRK2. In Mus musculus (Mouse), this protein is SLIT and NTRK-like protein 2 (Slitrk2).